Consider the following 124-residue polypeptide: Large ribosomal subunit protein bL17 (124 aa).

It belongs to the bacterial ribosomal protein bL17 family. As to quaternary structure, part of the 50S ribosomal subunit. Contacts protein L32.

This chain is Large ribosomal subunit protein bL17, found in Trichlorobacter lovleyi (strain ATCC BAA-1151 / DSM 17278 / SZ) (Geobacter lovleyi).